A 430-amino-acid chain; its full sequence is Dihydroorotase (430 aa).

Residues H61 and H63 each contribute to the Zn(2+) site. Substrate contacts are provided by residues 63–65 (HLR) and N95. The Zn(2+) site is built by D153, H180, and H233. A substrate-binding site is contributed by N279. D306 is a Zn(2+) binding site. D306 is a catalytic residue. Residue H310 participates in substrate binding.

Belongs to the metallo-dependent hydrolases superfamily. DHOase family. Class I DHOase subfamily. It depends on Zn(2+) as a cofactor.

It catalyses the reaction (S)-dihydroorotate + H2O = N-carbamoyl-L-aspartate + H(+). Its pathway is pyrimidine metabolism; UMP biosynthesis via de novo pathway; (S)-dihydroorotate from bicarbonate: step 3/3. Its function is as follows. Catalyzes the reversible cyclization of carbamoyl aspartate to dihydroorotate. This is Dihydroorotase from Caldicellulosiruptor saccharolyticus (strain ATCC 43494 / DSM 8903 / Tp8T 6331).